Here is a 300-residue protein sequence, read N- to C-terminus: Ribosomal protein L11 methyltransferase (300 aa).

Residues threonine 144, glycine 165, aspartate 187, and asparagine 235 each coordinate S-adenosyl-L-methionine.

This sequence belongs to the methyltransferase superfamily. PrmA family.

The protein localises to the cytoplasm. The catalysed reaction is L-lysyl-[protein] + 3 S-adenosyl-L-methionine = N(6),N(6),N(6)-trimethyl-L-lysyl-[protein] + 3 S-adenosyl-L-homocysteine + 3 H(+). Functionally, methylates ribosomal protein L11. The sequence is that of Ribosomal protein L11 methyltransferase from Prochlorococcus marinus (strain MIT 9515).